A 261-amino-acid chain; its full sequence is Acidic leucine-rich nuclear phosphoprotein 32 family member B (261 aa).

LRR repeat units follow at residues 16–40 (PAAVRELVLDNCKSNDGKIEGLTAE), 43–64 (NLEFLSLINVGLISVSNLPKLP), 65–87 (KLKKLELSDNRICGGLDMLAEKL), and 89–110 (NLTHLNLSGNKLKDIGTLEPLK). At Lys86 the chain carries N6-acetyllysine. Residues 123 to 161 (CEVTNLNDYRESVFKLLPQLTYLDGYDREDREAPDSDAE) enclose the LRRCT domain. The disordered stretch occupies residues 149-261 (DREDREAPDS…RETDDEGEDD (113 aa)). A compositionally biased stretch (acidic residues) spans 157–243 (DSDAEVDGVD…DEDEDEEEEE (87 aa)). Phosphoserine is present on Ser158. The span at 244-254 (SGKGEGRKRET) shows a compositional bias: basic and acidic residues. Position 254 is a phosphothreonine (Thr254).

It belongs to the ANP32 family. In terms of assembly, monomer. Interacts with histones H3 and H4. In terms of processing, some glutamate residues are glycylated by TTLL8. This modification occurs exclusively on glutamate residues and results in a glycine chain on the gamma-carboxyl group.

Its subcellular location is the nucleus. In terms of biological role, multifunctional protein working as a cell cycle progression factor as well as a cell survival factor. Required for the progression from the G1 to the S phase. Anti-apoptotic protein which functions as a caspase-3 inhibitor. Has no phosphatase 2A (PP2A) inhibitor activity. Exhibits histone chaperone properties, stimulating core histones to assemble into a nucleosome. This is Acidic leucine-rich nuclear phosphoprotein 32 family member B (ANP32B) from Ovis aries (Sheep).